The following is a 312-amino-acid chain: Malate dehydrogenase (312 aa).

NAD(+) is bound by residues 7-13 (GAAGGIG) and Asp34. Substrate is bound by residues Arg81 and Arg87. NAD(+) is bound by residues Asn94 and 117–119 (ITN). Asn119 and Arg153 together coordinate substrate. The active-site Proton acceptor is His177. Met227 lines the NAD(+) pocket.

Belongs to the LDH/MDH superfamily. MDH type 1 family. In terms of assembly, homodimer.

It carries out the reaction (S)-malate + NAD(+) = oxaloacetate + NADH + H(+). Its function is as follows. Catalyzes the reversible oxidation of malate to oxaloacetate. This chain is Malate dehydrogenase, found in Klebsiella pneumoniae (strain 342).